We begin with the raw amino-acid sequence, 640 residues long: Pro-neuregulin-1, membrane-bound isoform (640 aa).

A propeptide spanning residues 1-19 is cleaved from the precursor; the sequence is MSERKEGRGKGKGKKKERG. The segment at 1 to 53 is disordered; it reads MSERKEGRGKGKGKKKERGSGKKPESAAGSQSPALPPRLKEMKSQESAAGSKL. The Extracellular segment spans residues 20-242; sequence SGKKPESAAG…EKAEELYQKR (223 aa). The Ig-like C2-type domain occupies 37-128; that stretch reads PRLKEMKSQE…GNDSASANIT (92 aa). Cysteine 57 and cysteine 112 form a disulfide bridge. 3 N-linked (GlcNAc...) asparagine glycosylation sites follow: asparagine 120, asparagine 126, and asparagine 164. The region spanning 178 to 222 is the EGF-like domain; that stretch reads HLVKCAEKEKTFCVNGGECFMVKDLSNPSRYLCKCQPGFTGARCT. Intrachain disulfides connect cysteine 182–cysteine 196, cysteine 190–cysteine 210, and cysteine 212–cysteine 221. A helical transmembrane segment spans residues 243–265; it reads VLTITGICIALLVVGIMCVVAYC. Residues 266–640 lie on the Cytoplasmic side of the membrane; it reads KTKKQRKKLH…VIANQDPIAV (375 aa). Positions 334–350 are enriched in low complexity; sequence TSHYTSTAHHSTTVTQT. Disordered regions lie at residues 334–360, 375–399, 433–461, and 524–588; these read TSHY…NGHT, SVEN…GGPR, RMSP…SMTV, and EYET…DTPF. Over residues 351–360 the composition is skewed to polar residues; that stretch reads PSHSWSNGHT. Over residues 387-397 the composition is skewed to gly residues; sequence GPRGRLNGTGG. The span at 542–552 shows a compositional bias: basic residues; that stretch reads ANSRRAKRTKP. Residues 563-574 are compositionally biased toward low complexity; that stretch reads DSNTSSQSSNSE.

This sequence belongs to the neuregulin family. As to quaternary structure, the cytoplasmic domain interacts with the LIM domain region of LIMK1. Forms a ternary complex with ERBB3 and ITGAV:ITGB3 or ITGA6:ITGB4. Interacts with NRDC and BACE1. Proteolytic cleavage close to the plasma membrane on the external face leads to the release of the soluble growth factor form. In terms of processing, N- and O-glycosylated. Extensive glycosylation precedes the proteolytic cleavage. In terms of tissue distribution, type I isoforms are the predominant forms expressed in the endocardium. Isoform alpha is expressed in breast, ovary, testis, prostate, heart, skeletal muscle, lung, placenta liver, kidney, salivary gland, small intestine and brain, but not in uterus, stomach, pancreas, and spleen. Isoform 3 is the predominant form in mesenchymal cells and in non-neuronal organs, whereas isoform 6 is the major neuronal form. Isoform 8 is expressed in spinal cord and brain. Isoform 9 is the major form in skeletal muscle cells; in the nervous system it is expressed in spinal cord and brain. Also detected in adult heart, placenta, lung, liver, kidney, and pancreas. Isoform 10 is expressed in nervous system: spinal cord motor neurons, dorsal root ganglion neurons, and brain. Predominant isoform expressed in sensory and motor neurons. Not detected in adult heart, placenta, lung, liver, skeletal muscle, kidney, and pancreas. Not expressed in fetal lung, liver and kidney. Type IV isoforms are brain-specific.

It is found in the cell membrane. The protein localises to the secreted. It localises to the nucleus. The protein resides in the membrane. In terms of biological role, direct ligand for ERBB3 and ERBB4 tyrosine kinase receptors. Concomitantly recruits ERBB1 and ERBB2 coreceptors, resulting in ligand-stimulated tyrosine phosphorylation and activation of the ERBB receptors. The multiple isoforms perform diverse functions such as inducing growth and differentiation of epithelial, glial, neuronal, and skeletal muscle cells; inducing expression of acetylcholine receptor in synaptic vesicles during the formation of the neuromuscular junction; stimulating lobuloalveolar budding and milk production in the mammary gland and inducing differentiation of mammary tumor cells; stimulating Schwann cell proliferation; implication in the development of the myocardium such as trabeculation of the developing heart. Isoform 10 may play a role in motor and sensory neuron development. Binds to ERBB4. Binds to ERBB3. Acts as a ligand for integrins and binds (via EGF domain) to integrins ITGAV:ITGB3 or ITGA6:ITGB4. Its binding to integrins and subsequent ternary complex formation with integrins and ERRB3 are essential for NRG1-ERBB signaling. Induces the phosphorylation and activation of MAPK3/ERK1, MAPK1/ERK2 and AKT1. Ligand-dependent ERBB4 endocytosis is essential for the NRG1-mediated activation of these kinases in neurons. The protein is Pro-neuregulin-1, membrane-bound isoform (NRG1) of Homo sapiens (Human).